An 864-amino-acid chain; its full sequence is Probable beta-glucosidase J (864 aa).

The active site involves Asp-233. The PA14 domain occupies 411 to 578 (TGEPGYTFRV…DTDAAIQQAV (168 aa)). N-linked (GlcNAc...) asparagine glycans are attached at residues Asn-434, Asn-447, and Asn-503.

It belongs to the glycosyl hydrolase 3 family.

It localises to the secreted. The catalysed reaction is Hydrolysis of terminal, non-reducing beta-D-glucosyl residues with release of beta-D-glucose.. Its pathway is glycan metabolism; cellulose degradation. Its function is as follows. Beta-glucosidases are one of a number of cellulolytic enzymes involved in the degradation of cellulosic biomass. Catalyzes the last step releasing glucose from the inhibitory cellobiose. This chain is Probable beta-glucosidase J (bglJ), found in Neosartorya fischeri (strain ATCC 1020 / DSM 3700 / CBS 544.65 / FGSC A1164 / JCM 1740 / NRRL 181 / WB 181) (Aspergillus fischerianus).